A 369-amino-acid chain; its full sequence is VYPHFKTPIQCRFLTSDSISIRRRTAVSRWRSPTFSANYNGVNAQVLGVLKQEQKEIEEEKRSSSLAEKLRLGSLTEDGLSYKEKFIVRCYEVGINKTATVETIANLLQEVGGNHAQSVGFSTDGFATTPTMRKLHLIWVTARMHIEIYRYPAWSDVVEIETWCQSEGRIGTRRDWIIKDFATDEVIGRATSKWVMMNQDTRRLQKVSDDVRDEYLVFCPKTPRLSFPEENNKSLKKISKLEDPAQHSRLGLSPRRADLDMNQHVNNVAYIGWVLESIPKEVLYTHELETITLDYRRECQHDDVVDSLTSPEVDEDTAVTKIIGTNGHAAAATEARDDSLKFLHFLRVSGQGLEINRGRTEWRKKSEKR.

Residues N262, H264, and C299 contribute to the active site.

The protein belongs to the acyl-ACP thioesterase family.

It is found in the plastid. The protein resides in the chloroplast. It carries out the reaction (9Z)-octadecenoyl-[ACP] + H2O = (9Z)-octadecenoate + holo-[ACP] + H(+). Plays an essential role in chain termination during de novo fatty acid synthesis. High thioesterase activity for oleoyl-ACP versus other acyl-ACPs. The sequence is that of Oleoyl-acyl carrier protein thioesterase, chloroplastic (FATA) from Coriandrum sativum (Coriander).